We begin with the raw amino-acid sequence, 333 residues long: Phosphate acyltransferase (333 aa).

It belongs to the PlsX family. As to quaternary structure, homodimer. Probably interacts with PlsY.

It localises to the cytoplasm. It catalyses the reaction a fatty acyl-[ACP] + phosphate = an acyl phosphate + holo-[ACP]. Its pathway is lipid metabolism; phospholipid metabolism. Catalyzes the reversible formation of acyl-phosphate (acyl-PO(4)) from acyl-[acyl-carrier-protein] (acyl-ACP). This enzyme utilizes acyl-ACP as fatty acyl donor, but not acyl-CoA. This is Phosphate acyltransferase from Cellvibrio japonicus (strain Ueda107) (Pseudomonas fluorescens subsp. cellulosa).